The following is a 400-amino-acid chain: Vitamin K-dependent protein Z (400 aa).

An N-terminal signal peptide occupies residues 1–23; sequence MAGCVPLLQGLVLVLALHRVEPS. Positions 24-40 are excised as a propeptide; it reads VFLPASKANDVLVRWKR. One can recognise a Gla domain in the interval 41–86; the sequence is AGSYLLEELFEGNLEKECYEEICVYEEAREVFENEVVTDEFWRRYK. A 4-carboxyglutamate mark is found at Glu47, Glu48, Glu51, Glu55, Glu57, Glu60, Glu61, Glu66, Glu67, Glu70, Glu73, Glu75, and Glu80. Cys58 and Cys63 are disulfide-bonded. 2 consecutive EGF-like domains span residues 87–123 and 125–166; these read GGSP…SNCE and AKNE…KQCV. 7 disulfide bridges follow: Cys91/Cys102, Cys96/Cys111, Cys113/Cys122, Cys129/Cys141, Cys137/Cys150, Cys152/Cys165, and Cys203/Cys219. An O-linked (Glc...) serine glycan is attached at Ser93. Asn99 carries N-linked (GlcNAc...) asparagine glycosylation. Position 104 is a (3R)-3-hydroxyaspartate (Asp104). One can recognise a Peptidase S1 domain in the interval 175–400; that stretch reads VLTSEKRAPD…YSLWFKQIMN (226 aa). N-linked (GlcNAc...) asparagine glycans are attached at residues Asn225, Asn233, Asn306, and Asn332. Cys327 and Cys341 are oxidised to a cystine.

This sequence belongs to the peptidase S1 family. Interacts with SERPINA10. In terms of processing, the iron and 2-oxoglutarate dependent 3-hydroxylation of aspartate and asparagine is (R) stereospecific within EGF domains. As to expression, plasma.

The protein localises to the secreted. In terms of biological role, appears to assist hemostasis by binding thrombin and promoting its association with phospholipid vesicles. Inhibits activity of the coagulation protease factor Xa in the presence of SERPINA10, calcium and phospholipids. The polypeptide is Vitamin K-dependent protein Z (PROZ) (Homo sapiens (Human)).